Consider the following 556-residue polypeptide: Urocanate hydratase (556 aa).

Residues 52–53, glutamine 130, 176–178, glutamate 196, arginine 201, 242–243, 263–267, 273–274, and tyrosine 322 contribute to the NAD(+) site; these read GG, GMG, NA, QTSAH, and YL. Cysteine 410 is an active-site residue. NAD(+) is bound at residue glycine 492.

Belongs to the urocanase family. NAD(+) serves as cofactor.

Its subcellular location is the cytoplasm. It catalyses the reaction 4-imidazolone-5-propanoate = trans-urocanate + H2O. The protein operates within amino-acid degradation; L-histidine degradation into L-glutamate; N-formimidoyl-L-glutamate from L-histidine: step 2/3. Catalyzes the conversion of urocanate to 4-imidazolone-5-propionate. The protein is Urocanate hydratase of Bradyrhizobium sp. (strain BTAi1 / ATCC BAA-1182).